We begin with the raw amino-acid sequence, 165 residues long: Thiol peroxidase (165 aa).

In terms of domain architecture, Thioredoxin spans 18 to 164 (RKVGDKAPNF…YEAAIEAAKK (147 aa)). Catalysis depends on Cys-60, which acts as the Cysteine sulfenic acid (-SOH) intermediate. Cys-60 and Cys-94 are joined by a disulfide.

This sequence belongs to the peroxiredoxin family. Tpx subfamily. In terms of assembly, homodimer.

It carries out the reaction a hydroperoxide + [thioredoxin]-dithiol = an alcohol + [thioredoxin]-disulfide + H2O. Functionally, thiol-specific peroxidase that catalyzes the reduction of hydrogen peroxide and organic hydroperoxides to water and alcohols, respectively. Plays a role in cell protection against oxidative stress by detoxifying peroxides. This Listeria innocua serovar 6a (strain ATCC BAA-680 / CLIP 11262) protein is Thiol peroxidase.